Consider the following 234-residue polypeptide: 2-C-methyl-D-erythritol 4-phosphate cytidylyltransferase (234 aa).

It belongs to the IspD/TarI cytidylyltransferase family. IspD subfamily.

It carries out the reaction 2-C-methyl-D-erythritol 4-phosphate + CTP + H(+) = 4-CDP-2-C-methyl-D-erythritol + diphosphate. The protein operates within isoprenoid biosynthesis; isopentenyl diphosphate biosynthesis via DXP pathway; isopentenyl diphosphate from 1-deoxy-D-xylulose 5-phosphate: step 2/6. Catalyzes the formation of 4-diphosphocytidyl-2-C-methyl-D-erythritol from CTP and 2-C-methyl-D-erythritol 4-phosphate (MEP). In Syntrophus aciditrophicus (strain SB), this protein is 2-C-methyl-D-erythritol 4-phosphate cytidylyltransferase.